The chain runs to 512 residues: Cytochrome P450 monooxygenase astB (512 aa).

The helical transmembrane segment at 5-25 (DLSFPAAIGAVFGAVAISVAA) threads the bilayer. Cysteine 452 serves as a coordination point for heme.

The protein belongs to the cytochrome P450 family. Requires heme as cofactor.

Its subcellular location is the membrane. The protein operates within secondary metabolite biosynthesis; terpenoid biosynthesis. Functionally, cytochrome P450 monooxygenase; part of the gene cluster that mediates the biosynthesis of the sesquiterpenoid aspterric acid (AA), an inhibitor of dihydroxy-acid dehydratase (DHAD) effective as an herbicide. AstB catalyzes the second step within the pathway and converts (-)-daucane produced by the terpene cyclase astA into an alpha-epoxy carboxylate intermediate which is further converted into the tricyclic aspterric acid by the cytochrome P450 monooxygenase astC. This chain is Cytochrome P450 monooxygenase astB, found in Aspergillus terreus (strain NIH 2624 / FGSC A1156).